The following is a 77-amino-acid chain: Large ribosomal subunit protein uL29 (77 aa).

It belongs to the universal ribosomal protein uL29 family.

This Cutibacterium acnes (strain DSM 16379 / KPA171202) (Propionibacterium acnes) protein is Large ribosomal subunit protein uL29.